A 252-amino-acid polypeptide reads, in one-letter code: MQICLMDETGATDGALSVLAARWGLEHDEDNPMALVLTPQHLELRKRDEPKLGGIFVDFVGGAMAHRRKFGGGRGEAVAKAVGIKGDYLPDVVDATAGLGRDAFVLASVGCRVRMLERNPVVAALLDDGLTRGYADADIGPWLQQRLQLIHASSLTALTDITPRPQVVYLDPMFPHRQKSALVKKEMRVFQSLVGPDLDADGLLEPARQLATKRVVVKRPDYAPPLADVATPNAIVTKGHRFDIYAGTPLTE.

S-adenosyl-L-methionine-binding positions include 101–102 (RD), 117–118 (ER), 153–154 (SS), and Asp-171.

It belongs to the methyltransferase superfamily. RsmJ family.

The protein resides in the cytoplasm. The catalysed reaction is guanosine(1516) in 16S rRNA + S-adenosyl-L-methionine = N(2)-methylguanosine(1516) in 16S rRNA + S-adenosyl-L-homocysteine + H(+). Its function is as follows. Specifically methylates the guanosine in position 1516 of 16S rRNA. The chain is Ribosomal RNA small subunit methyltransferase J from Salmonella schwarzengrund (strain CVM19633).